A 106-amino-acid polypeptide reads, in one-letter code: Gibberellin-regulated protein 4 (106 aa).

An N-terminal signal peptide occupies residues 1-25 (MAKSYGAIFLLTLIVLFMLQTMVMA).

This sequence belongs to the GASA family. Six disulfide bonds may be present. In terms of tissue distribution, expressed in flower buds, style, stamen filaments, vasculature of petals, root phloem, vasculature of cotyledons and rosette leaves and developing embryo.

Its subcellular location is the secreted. Its function is as follows. Gibberellin-regulated protein involved in the regulation of floral meristem and floral organ identity, and promotion of seed size and weight. May play a role in the promotion of gibberellin responses such as regulation of flowering under short-day conditions, seed germination and inhibition of gibberellin oxidase. Possesses redox activity in E.coli and may function in redox regulation in planta. In Arabidopsis thaliana (Mouse-ear cress), this protein is Gibberellin-regulated protein 4 (GASA4).